A 146-amino-acid polypeptide reads, in one-letter code: Large ribosomal subunit protein uL15 (146 aa).

A disordered region spans residues 1 to 57 (MKLFELQPAPGSKKLPKRKGRGHGTGNGKTAGRGHKGQNARSGGGVRPGFEGGQMPL). Gly residues predominate over residues 42–52 (SGGGVRPGFEG).

This sequence belongs to the universal ribosomal protein uL15 family. As to quaternary structure, part of the 50S ribosomal subunit.

Its function is as follows. Binds to the 23S rRNA. The polypeptide is Large ribosomal subunit protein uL15 (Acetivibrio thermocellus (strain ATCC 27405 / DSM 1237 / JCM 9322 / NBRC 103400 / NCIMB 10682 / NRRL B-4536 / VPI 7372) (Clostridium thermocellum)).